Here is an 880-residue protein sequence, read N- to C-terminus: Alanine--tRNA ligase (880 aa).

Positions 563, 567, 665, and 669 each coordinate Zn(2+).

This sequence belongs to the class-II aminoacyl-tRNA synthetase family. Requires Zn(2+) as cofactor.

It localises to the cytoplasm. It catalyses the reaction tRNA(Ala) + L-alanine + ATP = L-alanyl-tRNA(Ala) + AMP + diphosphate. Catalyzes the attachment of alanine to tRNA(Ala) in a two-step reaction: alanine is first activated by ATP to form Ala-AMP and then transferred to the acceptor end of tRNA(Ala). Also edits incorrectly charged Ser-tRNA(Ala) and Gly-tRNA(Ala) via its editing domain. In Desulforudis audaxviator (strain MP104C), this protein is Alanine--tRNA ligase.